The sequence spans 300 residues: Protoheme IX farnesyltransferase 1 (300 aa).

The next 9 membrane-spanning stretches (helical) occupy residues V28–L48, V54–I74, A100–N120, L122–L142, N149–T169, A176–I196, C222–M242, S243–W263, and F280–A300.

The protein belongs to the UbiA prenyltransferase family. Protoheme IX farnesyltransferase subfamily.

The protein resides in the cell inner membrane. It catalyses the reaction heme b + (2E,6E)-farnesyl diphosphate + H2O = Fe(II)-heme o + diphosphate. Its pathway is porphyrin-containing compound metabolism; heme O biosynthesis; heme O from protoheme: step 1/1. In terms of biological role, converts heme B (protoheme IX) to heme O by substitution of the vinyl group on carbon 2 of heme B porphyrin ring with a hydroxyethyl farnesyl side group. The chain is Protoheme IX farnesyltransferase 1 from Shewanella sp. (strain ANA-3).